Consider the following 416-residue polypeptide: Serine hydroxymethyltransferase (416 aa).

Residues leucine 119 and 123 to 125 (GHL) each bind (6S)-5,6,7,8-tetrahydrofolate. Lysine 228 is modified (N6-(pyridoxal phosphate)lysine).

Belongs to the SHMT family. As to quaternary structure, homodimer. Pyridoxal 5'-phosphate is required as a cofactor.

It localises to the cytoplasm. It carries out the reaction (6R)-5,10-methylene-5,6,7,8-tetrahydrofolate + glycine + H2O = (6S)-5,6,7,8-tetrahydrofolate + L-serine. The protein operates within one-carbon metabolism; tetrahydrofolate interconversion. It participates in amino-acid biosynthesis; glycine biosynthesis; glycine from L-serine: step 1/1. Its function is as follows. Catalyzes the reversible interconversion of serine and glycine with tetrahydrofolate (THF) serving as the one-carbon carrier. This reaction serves as the major source of one-carbon groups required for the biosynthesis of purines, thymidylate, methionine, and other important biomolecules. Also exhibits THF-independent aldolase activity toward beta-hydroxyamino acids, producing glycine and aldehydes, via a retro-aldol mechanism. The sequence is that of Serine hydroxymethyltransferase from Moorella thermoacetica (strain ATCC 39073 / JCM 9320).